A 143-amino-acid chain; its full sequence is Large-conductance mechanosensitive channel (143 aa).

2 consecutive transmembrane segments (helical) span residues 19-39 and 81-101; these read VGVI…GDLI and GSFL…FGVI.

Belongs to the MscL family. As to quaternary structure, homopentamer.

It localises to the cell inner membrane. Functionally, channel that opens in response to stretch forces in the membrane lipid bilayer. May participate in the regulation of osmotic pressure changes within the cell. In Rhodopseudomonas palustris (strain BisB5), this protein is Large-conductance mechanosensitive channel.